The following is a 365-amino-acid chain: MSANDSPSGQQTTTSASLDAVRHATHDSAFLRACRREPVPHTPVWFMRQAGRSLPEYLKVREGIAMLDSCMMPELVAEITLQPVRRHKVDAAIYFSDIVVPLKAIGIDLDIKPGVGPVIAEPIRTRADLARLRDLTPEDVPYVTEAIGMLTAELGATPLIGFAGAPFTLASYLVEGGPSRNHERTKAMMYGDPQLWADLVDRLAEITGAFLKVQIEAGASAVQLFDSWVGALAPADYRRAVLPASAKVFDAVAPYGVPRIHFGVGTGELLGLMGEAGADVVGVDWRVPLNEAARRVGPGKALQGNLDPAVLFAPTPAVEEKTREVLDAAAGLEGHIFNLGHGVMPNMDPDALTRLVGYVHEQTAR.

Polar residues predominate over residues 1 to 17; that stretch reads MSANDSPSGQQTTTSAS. Positions 1 to 20 are disordered; it reads MSANDSPSGQQTTTSASLDA. Substrate-binding positions include 48-52, Asp97, Tyr172, Ser227, and His341; that span reads RQAGR.

The protein belongs to the uroporphyrinogen decarboxylase family. As to quaternary structure, homodimer.

The protein localises to the cytoplasm. The catalysed reaction is uroporphyrinogen III + 4 H(+) = coproporphyrinogen III + 4 CO2. It functions in the pathway porphyrin-containing compound metabolism; protoporphyrin-IX biosynthesis; coproporphyrinogen-III from 5-aminolevulinate: step 4/4. Its function is as follows. Catalyzes the decarboxylation of four acetate groups of uroporphyrinogen-III to yield coproporphyrinogen-III. This chain is Uroporphyrinogen decarboxylase, found in Streptomyces griseus subsp. griseus (strain JCM 4626 / CBS 651.72 / NBRC 13350 / KCC S-0626 / ISP 5235).